Reading from the N-terminus, the 360-residue chain is Peptide chain release factor 1 (360 aa).

Gln-237 bears the N5-methylglutamine mark.

The protein belongs to the prokaryotic/mitochondrial release factor family. Methylated by PrmC. Methylation increases the termination efficiency of RF1.

It localises to the cytoplasm. Peptide chain release factor 1 directs the termination of translation in response to the peptide chain termination codons UAG and UAA. This chain is Peptide chain release factor 1, found in Pseudomonas fluorescens (strain SBW25).